The following is a 741-amino-acid chain: Cysteine--tRNA ligase, cytoplasmic (741 aa).

Cysteine 46 is a Zn(2+) binding site. A 'HIGH' region motif is present at residues 48–58 (PTVYDASHMGH). Position 297 is a phosphoserine (serine 297). Zn(2+) contacts are provided by cysteine 340, histidine 365, and glutamate 369. Positions 398–402 (KMSKS) match the 'KMSKS' region motif. Residue lysine 401 participates in ATP binding.

It belongs to the class-I aminoacyl-tRNA synthetase family. Zn(2+) is required as a cofactor.

It localises to the cytoplasm. The catalysed reaction is tRNA(Cys) + L-cysteine + ATP = L-cysteinyl-tRNA(Cys) + AMP + diphosphate. This is Cysteine--tRNA ligase, cytoplasmic (Aats-cys) from Drosophila pseudoobscura pseudoobscura (Fruit fly).